Consider the following 206-residue polypeptide: Venom allergen 5 (206 aa).

Cystine bridges form between C5-C18, C9-C103, C28-C96, and C172-C189. Positions 47 to 191 (LKVHNDFRQK…WYTHYLVCNY (145 aa)) constitute an SCP domain.

Belongs to the CRISP family. Venom allergen 5-like subfamily. Expressed by the venom gland.

Its subcellular location is the secreted. This is Venom allergen 5 from Vespula vidua (Ground hornet).